The sequence spans 110 residues: Large ribosomal subunit protein uL22 (110 aa).

Belongs to the universal ribosomal protein uL22 family. In terms of assembly, part of the 50S ribosomal subunit.

Functionally, this protein binds specifically to 23S rRNA; its binding is stimulated by other ribosomal proteins, e.g. L4, L17, and L20. It is important during the early stages of 50S assembly. It makes multiple contacts with different domains of the 23S rRNA in the assembled 50S subunit and ribosome. Its function is as follows. The globular domain of the protein is located near the polypeptide exit tunnel on the outside of the subunit, while an extended beta-hairpin is found that lines the wall of the exit tunnel in the center of the 70S ribosome. This is Large ribosomal subunit protein uL22 from Shewanella halifaxensis (strain HAW-EB4).